The chain runs to 540 residues: MTKYIFVTGGVVSSLGKGISASSLGRLLKNRGLKVTMQKFDPYINIDPGTMNPYQHGEVYVTDDGTEADLDLGHYERIVDVRTSKYSNVTTGKIYQEVLDKERRGDYHGATVQVIPHITDMIKKKIMRAALTTDSDVIISEIGGTVGDIESTPFMEAIRQMRREVGEENVMYIHCTLVPYLHAAHEMKTKPTQHSVAELRSIGIQPNMLVLRAEKPIAQELKNKISTFTDVPVDRIIESIDAPSLFDLPLAFQAQGMDQKVCDFLHLESPKPEADMEAWKKLDERAKNLKNETTITLVGKYVELEDAYISVTDALQHAGYLYDTKIKVNKVQAEDITEDNIAEIMKDSDGLIVPGGFGTRGLEGMITSIKYAREHDIPFLGICLGMQMASVEFARNVLGLKDANSAEANPDTKNNIIDIMADKRDEENIGGTLRLGLYPATLKKGTKTREAYDDQDVIQERHRHRYEFNNEYREAFEKAGMVFSGVSPDNHLVEIIEIPNKKFFIAAQYHPEFLSRPQRPEGLFKAFIGAASGLPAQHFN.

The amidoligase domain stretch occupies residues 1–267; sequence MTKYIFVTGG…DQKVCDFLHL (267 aa). A CTP-binding site is contributed by serine 13. Serine 13 lines the UTP pocket. 14-19 provides a ligand contact to ATP; that stretch reads SLGKGI. Position 54 (tyrosine 54) interacts with L-glutamine. Aspartate 71 serves as a coordination point for ATP. Mg(2+)-binding residues include aspartate 71 and glutamate 141. Residues 148–150, 188–193, and lysine 224 contribute to the CTP site; these read DIE and KTKPTQ. Residues 188-193 and lysine 224 each bind UTP; that span reads KTKPTQ. In terms of domain architecture, Glutamine amidotransferase type-1 spans 294–537; it reads TITLVGKYVE…IGAASGLPAQ (244 aa). Glycine 356 lines the L-glutamine pocket. Cysteine 383 acts as the Nucleophile; for glutamine hydrolysis in catalysis. L-glutamine contacts are provided by residues 384–387, glutamate 407, and arginine 465; that span reads LGMQ. Active-site residues include histidine 510 and glutamate 512.

The protein belongs to the CTP synthase family. Homotetramer.

It carries out the reaction UTP + L-glutamine + ATP + H2O = CTP + L-glutamate + ADP + phosphate + 2 H(+). The catalysed reaction is L-glutamine + H2O = L-glutamate + NH4(+). The enzyme catalyses UTP + NH4(+) + ATP = CTP + ADP + phosphate + 2 H(+). It functions in the pathway pyrimidine metabolism; CTP biosynthesis via de novo pathway; CTP from UDP: step 2/2. Its activity is regulated as follows. Allosterically activated by GTP, when glutamine is the substrate; GTP has no effect on the reaction when ammonia is the substrate. The allosteric effector GTP functions by stabilizing the protein conformation that binds the tetrahedral intermediate(s) formed during glutamine hydrolysis. Inhibited by the product CTP, via allosteric rather than competitive inhibition. In terms of biological role, catalyzes the ATP-dependent amination of UTP to CTP with either L-glutamine or ammonia as the source of nitrogen. Regulates intracellular CTP levels through interactions with the four ribonucleotide triphosphates. This chain is CTP synthase, found in Lactobacillus johnsonii (strain CNCM I-12250 / La1 / NCC 533).